The following is a 131-amino-acid chain: Small ribosomal subunit protein uS8 (131 aa).

The protein belongs to the universal ribosomal protein uS8 family. Part of the 30S ribosomal subunit. Contacts proteins S5 and S12.

In terms of biological role, one of the primary rRNA binding proteins, it binds directly to 16S rRNA central domain where it helps coordinate assembly of the platform of the 30S subunit. In Wolinella succinogenes (strain ATCC 29543 / DSM 1740 / CCUG 13145 / JCM 31913 / LMG 7466 / NCTC 11488 / FDC 602W) (Vibrio succinogenes), this protein is Small ribosomal subunit protein uS8.